We begin with the raw amino-acid sequence, 208 residues long: Recombination protein RecR (208 aa).

Residues 60-75 (CKVCHNICDDEVCSIC) form a C4-type zinc finger. The Toprim domain occupies 83-178 (SLVCVVENIK…RISVIARGVS (96 aa)).

This sequence belongs to the RecR family.

In terms of biological role, may play a role in DNA repair. It seems to be involved in an RecBC-independent recombinational process of DNA repair. It may act with RecF and RecO. The protein is Recombination protein RecR of Parabacteroides distasonis (strain ATCC 8503 / DSM 20701 / CIP 104284 / JCM 5825 / NCTC 11152).